The following is a 275-amino-acid chain: 4-hydroxy-3-methylbut-2-enyl diphosphate reductase (275 aa).

Residue C12 participates in [4Fe-4S] cluster binding. (2E)-4-hydroxy-3-methylbut-2-enyl diphosphate is bound by residues H36 and H70. Residues H36 and H70 each contribute to the dimethylallyl diphosphate site. Isopentenyl diphosphate contacts are provided by H36 and H70. C92 serves as a coordination point for [4Fe-4S] cluster. Residue H120 participates in (2E)-4-hydroxy-3-methylbut-2-enyl diphosphate binding. Residue H120 participates in dimethylallyl diphosphate binding. Position 120 (H120) interacts with isopentenyl diphosphate. Catalysis depends on E122, which acts as the Proton donor. T158 is a (2E)-4-hydroxy-3-methylbut-2-enyl diphosphate binding site. C186 lines the [4Fe-4S] cluster pocket. (2E)-4-hydroxy-3-methylbut-2-enyl diphosphate is bound by residues S214, S215, N216, and S258. Dimethylallyl diphosphate-binding residues include S214, S215, N216, and S258. Residues S214, S215, N216, and S258 each contribute to the isopentenyl diphosphate site.

It belongs to the IspH family. The cofactor is [4Fe-4S] cluster.

The catalysed reaction is isopentenyl diphosphate + 2 oxidized [2Fe-2S]-[ferredoxin] + H2O = (2E)-4-hydroxy-3-methylbut-2-enyl diphosphate + 2 reduced [2Fe-2S]-[ferredoxin] + 2 H(+). The enzyme catalyses dimethylallyl diphosphate + 2 oxidized [2Fe-2S]-[ferredoxin] + H2O = (2E)-4-hydroxy-3-methylbut-2-enyl diphosphate + 2 reduced [2Fe-2S]-[ferredoxin] + 2 H(+). The protein operates within isoprenoid biosynthesis; dimethylallyl diphosphate biosynthesis; dimethylallyl diphosphate from (2E)-4-hydroxy-3-methylbutenyl diphosphate: step 1/1. Its pathway is isoprenoid biosynthesis; isopentenyl diphosphate biosynthesis via DXP pathway; isopentenyl diphosphate from 1-deoxy-D-xylulose 5-phosphate: step 6/6. In terms of biological role, catalyzes the conversion of 1-hydroxy-2-methyl-2-(E)-butenyl 4-diphosphate (HMBPP) into a mixture of isopentenyl diphosphate (IPP) and dimethylallyl diphosphate (DMAPP). Acts in the terminal step of the DOXP/MEP pathway for isoprenoid precursor biosynthesis. In Sulfurimonas denitrificans (strain ATCC 33889 / DSM 1251) (Thiomicrospira denitrificans (strain ATCC 33889 / DSM 1251)), this protein is 4-hydroxy-3-methylbut-2-enyl diphosphate reductase.